Here is a 643-residue protein sequence, read N- to C-terminus: Threonine--tRNA ligase (643 aa).

Residues 1 to 61 (MPIITLPDGA…SVNANINIIT (61 aa)) enclose the TGS domain. Residues 242–533 (DHRKIGKKLD…LIEEYEGKFP (292 aa)) are catalytic. Zn(2+) is bound by residues Cys333, His384, and His510.

This sequence belongs to the class-II aminoacyl-tRNA synthetase family. Homodimer. The cofactor is Zn(2+).

Its subcellular location is the cytoplasm. It carries out the reaction tRNA(Thr) + L-threonine + ATP = L-threonyl-tRNA(Thr) + AMP + diphosphate + H(+). Functionally, catalyzes the attachment of threonine to tRNA(Thr) in a two-step reaction: L-threonine is first activated by ATP to form Thr-AMP and then transferred to the acceptor end of tRNA(Thr). Also edits incorrectly charged L-seryl-tRNA(Thr). This chain is Threonine--tRNA ligase, found in Prochlorococcus marinus (strain SARG / CCMP1375 / SS120).